Reading from the N-terminus, the 211-residue chain is Large ribosomal subunit protein bL25 (211 aa).

The segment at 185–211 (ESTTPAATEGEETEAAAAAPEPAAEDK) is disordered. Residues 199–211 (AAAAAPEPAAEDK) are compositionally biased toward low complexity.

The protein belongs to the bacterial ribosomal protein bL25 family. CTC subfamily. In terms of assembly, part of the 50S ribosomal subunit; part of the 5S rRNA/L5/L18/L25 subcomplex. Contacts the 5S rRNA. Binds to the 5S rRNA independently of L5 and L18.

Functionally, this is one of the proteins that binds to the 5S RNA in the ribosome where it forms part of the central protuberance. The chain is Large ribosomal subunit protein bL25 from Treponema denticola (strain ATCC 35405 / DSM 14222 / CIP 103919 / JCM 8153 / KCTC 15104).